We begin with the raw amino-acid sequence, 141 residues long: Large ribosomal subunit protein uL11 (141 aa).

It belongs to the universal ribosomal protein uL11 family. In terms of assembly, part of the ribosomal stalk of the 50S ribosomal subunit. Interacts with L10 and the large rRNA to form the base of the stalk. L10 forms an elongated spine to which L12 dimers bind in a sequential fashion forming a multimeric L10(L12)X complex. Post-translationally, one or more lysine residues are methylated.

Forms part of the ribosomal stalk which helps the ribosome interact with GTP-bound translation factors. This is Large ribosomal subunit protein uL11 from Methylacidiphilum infernorum (isolate V4) (Methylokorus infernorum (strain V4)).